The chain runs to 177 residues: Inorganic pyrophosphatase (177 aa).

The substrate site is built by K30, R44, and Y56. Positions 66, 71, and 103 each coordinate Mg(2+). Position 142 (Y142) interacts with substrate.

Belongs to the PPase family. Homohexamer. The cofactor is Mg(2+).

Its subcellular location is the cytoplasm. It carries out the reaction diphosphate + H2O = 2 phosphate + H(+). In terms of biological role, catalyzes the hydrolysis of inorganic pyrophosphate (PPi) forming two phosphate ions. The protein is Inorganic pyrophosphatase of Mesorhizobium japonicum (strain LMG 29417 / CECT 9101 / MAFF 303099) (Mesorhizobium loti (strain MAFF 303099)).